Consider the following 457-residue polypeptide: tRNA modification GTPase MnmE (457 aa).

(6S)-5-formyl-5,6,7,8-tetrahydrofolate-binding residues include R23, E85, and R124. The 157-residue stretch at 220–376 (GALVVLAGQV…LVTAIRAAVL (157 aa)) folds into the TrmE-type G domain. N230 contributes to the K(+) binding site. GTP-binding positions include 230 to 235 (NAGKSS), 249 to 255 (TDLPGTT), and 274 to 277 (DTAG). Residue S234 participates in Mg(2+) binding. K(+) contacts are provided by T249, L251, and T254. Residue T255 coordinates Mg(2+). K457 is a binding site for (6S)-5-formyl-5,6,7,8-tetrahydrofolate.

The protein belongs to the TRAFAC class TrmE-Era-EngA-EngB-Septin-like GTPase superfamily. TrmE GTPase family. As to quaternary structure, homodimer. Heterotetramer of two MnmE and two MnmG subunits. K(+) serves as cofactor.

The protein resides in the cytoplasm. Functionally, exhibits a very high intrinsic GTPase hydrolysis rate. Involved in the addition of a carboxymethylaminomethyl (cmnm) group at the wobble position (U34) of certain tRNAs, forming tRNA-cmnm(5)s(2)U34. The chain is tRNA modification GTPase MnmE from Nitratidesulfovibrio vulgaris (strain ATCC 29579 / DSM 644 / CCUG 34227 / NCIMB 8303 / VKM B-1760 / Hildenborough) (Desulfovibrio vulgaris).